Reading from the N-terminus, the 519-residue chain is Cytochrome P450 88A1 (519 aa).

Residues 1–21 (MLGVGMAAAVLLGAVALLLAD) form a helical membrane-spanning segment. A heme-binding site is contributed by Cys-466.

The protein belongs to the cytochrome P450 family. Heme serves as cofactor. In terms of tissue distribution, expressed in roots, developing leaves, the vegetative meristem, and suspension culture cells.

Its subcellular location is the membrane. It participates in plant hormone biosynthesis; gibberellin biosynthesis. This is Cytochrome P450 88A1 (CYP88A1) from Zea mays (Maize).